A 684-amino-acid polypeptide reads, in one-letter code: MAGVKAGLYLQSSVSALRGVGPALVSRLQHMDLWRVQDVLFHLPSRYQDRRHIASMATLQAGQERAILGEIVRVDHQRGGREQWLVTVSDGSGCLQIRLFHMALALRAQWQVGRRLWCFGELRGGFHGLEMIHPEWQMADVPQFQAPHHLTPFYPSSEGITQAQWRRWIAHALTLLDQLPDYLENRLPPQWPGLREGLRLLHESADEIPSPQHPAWQRLALEELLANHLAVRRMRQSGMMQNAPCLRSKGQMWQRFLAHLPFSPTMAQERVIAEINADLARHRPMRRLLQGDVGSGKTLVAAAATLTALEAGYQVAMMAPTEILAEQLHARFQQWLEPLGLEVGYLVGSRSPRVRRETAEALAGGRLSLVIGTQSLFQEGVAFACLGLVIIDEQHRFGVEQRRQLLEKGAMPHLLVMTATPIPRTLAMTVHADLEVSVIDALPPGRTPVETLVMPDSRRPELIGRMQHMLEAGRQIYWVCPLIEESEILELQAAEASVADLQAALPGVAVGLIHGRMRSAEKAEVMAAFQSGAVRILVATTVIEVGVDVPGASLMIIEHAERLGLAQLHQLRGRVGRGAQRSSCILLYHPPLSGKARERLRVMRETYDGFSIARKDLELRGPGEYLGTRQAGILQMRVANILRDEALLAMVPALAERLLQEDPEAVQAIVQRWLGNRVDYGQVG.

The interval 51 to 148 (RHIASMATLQ…ADVPQFQAPH (98 aa)) is wedge domain. In terms of domain architecture, Helicase ATP-binding spans 278–439 (DLARHRPMRR…VHADLEVSVI (162 aa)). Position 291–298 (291–298 (GDVGSGKT)) interacts with ATP. A DEAH box motif is present at residues 392–395 (DEQH).

It belongs to the helicase family. RecG subfamily. Monomer.

The catalysed reaction is Couples ATP hydrolysis with the unwinding of duplex DNA by translocating in the 3'-5' direction.. The enzyme catalyses ATP + H2O = ADP + phosphate + H(+). In terms of biological role, plays a critical role in recombination and DNA repair. Helps process Holliday junction intermediates to mature products by catalyzing branch migration. Has replication fork regression activity, unwinds stalled or blocked replication forks to make a HJ that can be resolved. Has a DNA unwinding activity characteristic of a DNA helicase with 3'-5' polarity. This chain is ATP-dependent DNA helicase RecG, found in Acidithiobacillus ferridurans.